We begin with the raw amino-acid sequence, 388 residues long: Chorismate synthase (388 aa).

Residues Arg-39 and Arg-45 each coordinate NADP(+). Residues 130-132, 251-252, Gly-296, 311-315, and Arg-337 each bind FMN; these read RSS, NA, and KPIPT.

The protein belongs to the chorismate synthase family. As to quaternary structure, homotetramer. The cofactor is FMNH2.

The catalysed reaction is 5-O-(1-carboxyvinyl)-3-phosphoshikimate = chorismate + phosphate. The protein operates within metabolic intermediate biosynthesis; chorismate biosynthesis; chorismate from D-erythrose 4-phosphate and phosphoenolpyruvate: step 7/7. In terms of biological role, catalyzes the anti-1,4-elimination of the C-3 phosphate and the C-6 proR hydrogen from 5-enolpyruvylshikimate-3-phosphate (EPSP) to yield chorismate, which is the branch point compound that serves as the starting substrate for the three terminal pathways of aromatic amino acid biosynthesis. This reaction introduces a second double bond into the aromatic ring system. This chain is Chorismate synthase, found in Streptococcus agalactiae serotype Ia (strain ATCC 27591 / A909 / CDC SS700).